A 434-amino-acid chain; its full sequence is Phosphomethylpyrimidine synthase 2 (434 aa).

Residues Met-94, Tyr-123, His-162, 184-186 (SRG), 225-228 (NAMR), and Glu-264 contribute to the substrate site. A Zn(2+)-binding site is contributed by His-268. Tyr-291 contributes to the substrate binding site. Residue His-332 participates in Zn(2+) binding. Residues Cys-408, Cys-411, and Cys-415 each contribute to the [4Fe-4S] cluster site.

Belongs to the ThiC family. [4Fe-4S] cluster serves as cofactor.

The enzyme catalyses 5-amino-1-(5-phospho-beta-D-ribosyl)imidazole + S-adenosyl-L-methionine = 4-amino-2-methyl-5-(phosphooxymethyl)pyrimidine + CO + 5'-deoxyadenosine + formate + L-methionine + 3 H(+). Its pathway is cofactor biosynthesis; thiamine diphosphate biosynthesis. Catalyzes the synthesis of the hydroxymethylpyrimidine phosphate (HMP-P) moiety of thiamine from aminoimidazole ribotide (AIR) in a radical S-adenosyl-L-methionine (SAM)-dependent reaction. In Methanosphaera stadtmanae (strain ATCC 43021 / DSM 3091 / JCM 11832 / MCB-3), this protein is Phosphomethylpyrimidine synthase 2.